Consider the following 138-residue polypeptide: Basic phospholipase A2 BP-III (138 aa).

The signal sequence occupies residues 1-16 (MRTLWIMAVLLVGVDG). Intrachain disulfides connect Cys-42–Cys-132, Cys-44–Cys-60, Cys-59–Cys-112, Cys-65–Cys-138, Cys-66–Cys-105, Cys-73–Cys-98, and Cys-91–Cys-103. The Ca(2+) site is built by Gly-45 and Gly-47. His-63 is a catalytic residue. The active site involves Asp-106.

It belongs to the phospholipase A2 family. Group II subfamily. K49 sub-subfamily. Ca(2+) is required as a cofactor. As to expression, expressed by the venom gland.

The protein resides in the secreted. It catalyses the reaction a 1,2-diacyl-sn-glycero-3-phosphocholine + H2O = a 1-acyl-sn-glycero-3-phosphocholine + a fatty acid + H(+). In terms of biological role, snake venom phospholipase A2 (PLA2) that has low phospholipase A2 activity. Shows anticoagulant activities, strong myolytic activity, infiltration of polymorphonuclear cells, and edema in stromal tissues. Induces cell death of Jurkat cells in a concentration dependent manner. PLA2 catalyzes the calcium-dependent hydrolysis of the 2-acyl groups in 3-sn-phosphoglycerides. The sequence is that of Basic phospholipase A2 BP-III from Protobothrops flavoviridis (Habu).